Consider the following 396-residue polypeptide: Probable sugar efflux transporter (396 aa).

Transmembrane regions (helical) follow at residues 15–35, 50–70, 81–101, 103–123, 136–156, 169–189, 209–229, 246–266, 275–295, 301–321, 333–353, and 364–384; these read VVTL…PVGL, VGIM…PFML, LICL…AWNF, VLVI…SITA, AQAL…GLPI, TFFA…KLLP, PALM…YTAY, FATV…LVFG, SLVS…LPAA, LAIL…GMQV, VAMA…ALVG, and AIGY…VLIF.

It belongs to the major facilitator superfamily. SotB (TC 2.A.1.2) family.

The protein resides in the cell inner membrane. Its function is as follows. Involved in the efflux of sugars. The physiological role may be the reduction of the intracellular concentration of toxic sugars or sugar metabolites. This chain is Probable sugar efflux transporter, found in Salmonella agona (strain SL483).